A 621-amino-acid chain; its full sequence is Probable potassium transport system protein Kup 2 (621 aa).

The next 12 helical transmembrane spans lie at 9 to 29, 48 to 68, 101 to 121, 136 to 156, 164 to 184, 210 to 230, 246 to 266, 275 to 295, 336 to 356, 364 to 384, 393 to 413, and 418 to 438; these read MAGLTLAALGVVYGDIGTSPL, IFGILSLIFWSLIFVVSVKYV, IVLLGLFGAALFYGDAIITPA, SGMEAYVLPMAVGVLVGLFLL, VGLMFGPVMMVWFAILGILGL, GFHAFLTLGSVVLALTGAEAL, WFSLVLPGLGLNYFGQGALLM, PFFLLAPDWALLPMIALATLA, IYMPFINWALLVAVLVVVLTF, AAYGIAVTGTMLITTMLFFVV, LPLALGITLLFGVIDTAFFAA, and VADGGWLPLVMGMAIFTLMST.

The protein belongs to the HAK/KUP transporter (TC 2.A.72) family.

Its subcellular location is the cell inner membrane. It carries out the reaction K(+)(in) + H(+)(in) = K(+)(out) + H(+)(out). Transport of potassium into the cell. Likely operates as a K(+):H(+) symporter. This chain is Probable potassium transport system protein Kup 2, found in Chromobacterium violaceum (strain ATCC 12472 / DSM 30191 / JCM 1249 / CCUG 213 / NBRC 12614 / NCIMB 9131 / NCTC 9757 / MK).